The primary structure comprises 910 residues: Chitin synthase A (910 aa).

The disordered stretch occupies residues 56-156 (NYHDDYDPRP…EPAPTPTPAP (101 aa)). 2 stretches are compositionally biased toward basic and acidic residues: residues 57-84 (YHDD…HHDA) and 130-148 (DPHD…HDEP). A run of 9 helical transmembrane segments spans residues 366–386 (WFFQ…IDAG), 448–468 (SAFG…YVAL), 583–603 (VYQT…FLVF), 620–640 (VLFI…FILS), 655–675 (MVYF…FITV), 701–721 (TLII…IIFL), 730–750 (FIQY…YAFC), 828–848 (GVVL…LQAG), and 876–896 (LYSV…FLVV).

Belongs to the chitin synthase family. Class I subfamily.

It is found in the cell membrane. It catalyses the reaction [(1-&gt;4)-N-acetyl-beta-D-glucosaminyl](n) + UDP-N-acetyl-alpha-D-glucosamine = [(1-&gt;4)-N-acetyl-beta-D-glucosaminyl](n+1) + UDP + H(+). Functionally, polymerizes chitin, a structural polymer of the cell wall and septum, by transferring the sugar moiety of UDP-GlcNAc to the non-reducing end of the growing chitin polymer. The polypeptide is Chitin synthase A (CHSA) (Ampelomyces quisqualis (Powdery mildew agent)).